The sequence spans 348 residues: MSLKEQLEHLQQKSLQDIQKVVDLDALNQIRVEVLGKKGPITEVLRGMRDLSNEERPKVGAFANEIKSDLAQAIEARKAELEAKKEAAQLAHETIDVTLPGQPVKKGTPHVLTQVIDDLEDLFIGMGYQVVAGFEVEDEKHNFEMLNMPADHPARDMQDTFYITKDTLMRTHMSPNEARDLESHDFANGPIKMISPGRVYRRDTDDATHSHQFYQMEGQVIDKNITMADLKGTLEYTIHHIFGEDRDLRFRPSYFPFTEPSVEVDISCFRCNGEGCSVCKQTGWIEVLGAGMTHPNVLKAGGVDPEVYGGFAFGLGIDRFAMLKYGVDDIRNFYLNDVRFLNQFTQEV.

Glu-259 provides a ligand contact to Mg(2+).

This sequence belongs to the class-II aminoacyl-tRNA synthetase family. Phe-tRNA synthetase alpha subunit type 1 subfamily. In terms of assembly, tetramer of two alpha and two beta subunits. Requires Mg(2+) as cofactor.

It localises to the cytoplasm. The catalysed reaction is tRNA(Phe) + L-phenylalanine + ATP = L-phenylalanyl-tRNA(Phe) + AMP + diphosphate + H(+). The polypeptide is Phenylalanine--tRNA ligase alpha subunit (Latilactobacillus sakei subsp. sakei (strain 23K) (Lactobacillus sakei subsp. sakei)).